Consider the following 401-residue polypeptide: Nicotinate phosphoribosyltransferase (401 aa).

Phosphohistidine; by autocatalysis is present on H221.

Belongs to the NAPRTase family. Transiently phosphorylated on a His residue during the reaction cycle. Phosphorylation strongly increases the affinity for substrates and increases the rate of nicotinate D-ribonucleotide production. Dephosphorylation regenerates the low-affinity form of the enzyme, leading to product release.

It carries out the reaction nicotinate + 5-phospho-alpha-D-ribose 1-diphosphate + ATP + H2O = nicotinate beta-D-ribonucleotide + ADP + phosphate + diphosphate. It participates in cofactor biosynthesis; NAD(+) biosynthesis; nicotinate D-ribonucleotide from nicotinate: step 1/1. In terms of biological role, catalyzes the synthesis of beta-nicotinate D-ribonucleotide from nicotinate and 5-phospho-D-ribose 1-phosphate at the expense of ATP. This chain is Nicotinate phosphoribosyltransferase, found in Pectobacterium carotovorum subsp. carotovorum (strain PC1).